Reading from the N-terminus, the 902-residue chain is Chloride channel protein 2 (902 aa).

The Cytoplasmic portion of the chain corresponds to 1–89 (MAASAAAAGE…RCHKFLVSRV (89 aa)). The tract at residues 18–36 (QYEQTLMYGRYTQELGAFA) is essential for channel gating by both voltage and cell volume. The residue at position 22 (Thr-22) is a Phosphothreonine. A modulates channel gating by both voltage and cell volume region spans residues 38-51 (EEAARIRLGGPEPW). A run of 2 helical transmembrane segments spans residues 90–123 (GEDW…AQQW) and 132–157 (ILLQ…TQIL). The short motif at 163–167 (GSGIP) is the Selectivity filter part_1 element. The segment at residues 166–173 (IPEMKTIL) is an intramembrane region (helical). 2 consecutive transmembrane segments (helical) span residues 182–200 (LTLK…ALGS) and 207–225 (EGPF…SKFL). A Selectivity filter part_2 motif is present at residues 205–209 (GKEGP). 2 intramembrane regions (helical) span residues 241-253 (MLAA…VGCC) and 257-265 (PIGGVLFSI). The next 5 helical transmembrane spans lie at 277–297 (YWRG…LAVW), 323–351 (LPAF…VQVM), 360–379 (FLMR…ISTL), 431–451 (ANVF…SALA), and 459–482 (GAFM…MAAW). The Selectivity filter part_3 signature appears at 459 to 463 (GAFMP). Residues 499-513 (GGYAVVGAAALAGAV) constitute an intramembrane region (helical). An intramembrane region (note=Loop between two helices) is located at residues 514–515 (TH). Positions 516–527 (TVSTAVIVFELT) form an intramembrane region, helical. Positions 528–532 (GQIAH) form an intramembrane region, note=Loop between two helices. Residues 533-550 (ILPVMIAVILANAVAQSL) form a helical membrane-spanning segment. The Cytoplasmic portion of the chain corresponds to 551–902 (QPSLYDSIIR…SPSDSDDKCQ (352 aa)). A CBS 1 domain is found at 586 to 644 (MVRDVPYVALNCTFRDLRLALHRTKGRMLALVESSESMILLGSIERSQVVTLLGAQLSA). The disordered stretch occupies residues 648–748 (RQHIQERRKA…TSDLEKPESC (101 aa)). 2 stretches are compositionally biased toward polar residues: residues 671 to 683 (PESS…NTED) and 706 to 719 (SNAS…TGSM). The 61-residue stretch at 794–854 (IDPAPFQLVE…GSVTAQGVKV (61 aa)) folds into the CBS 2 domain. The short motif at 816–817 (LL) is the Basolateral membrane sorting element. A disordered region spans residues 860-902 (SFRDSATSSSDTETTEVHALWGPHSCHGLPRDGSPSDSDDKCQ).

The protein belongs to the chloride channel (TC 2.A.49) family. ClC-2/CLCN2 subfamily. Homodimer. Interacts with auxiliary subunit HEPACAM.

It localises to the cell membrane. The protein resides in the basolateral cell membrane. Its subcellular location is the cell projection. It is found in the dendritic spine membrane. The protein localises to the axon. The enzyme catalyses chloride(in) = chloride(out). It catalyses the reaction thiocyanate(in) = thiocyanate(out). The catalysed reaction is bromide(in) = bromide(out). It carries out the reaction nitrate(in) = nitrate(out). The enzyme catalyses iodide(out) = iodide(in). With respect to regulation, common gate kinetics are down-regulated by intracellular ATP. Inhibited by AK-42, a derivative of meclofenamate. Inhibited by Cd(2+). Inhibited by Zn(2+) and PKC activation. Inhibited at acidic pH. CCLN2:HEPACAM channel conductance is up-regulated upon hypo-osmolarity. Voltage-gated and osmosensitive chloride channel. Forms a homodimeric channel where each subunit has its own ion conduction pathway. Conducts double-barreled currents controlled by two types of gates, two fast glutamate gates that control each subunit independently and a slow common gate that opens and shuts off both subunits simultaneously. Displays inward rectification currents activated upon membrane hyperpolarization and extracellular hypotonicity. Contributes to chloride conductance involved in neuron excitability. In hippocampal neurons, generates a significant part of resting membrane conductance and provides an additional chloride efflux pathway to prevent chloride accumulation in dendrites upon GABA receptor activation. In glia, associates with the auxiliary subunit HEPACAM/GlialCAM at astrocytic processes and myelinated fiber tracts where it may regulate transcellular chloride flux buffering extracellular chloride and potassium concentrations. Regulates aldosterone production in adrenal glands. The opening of CLCN2 channels at hyperpolarized membrane potentials in the glomerulosa causes cell membrane depolarization, activation of voltage-gated calcium channels and increased expression of aldosterone synthase, the rate-limiting enzyme for aldosterone biosynthesis. Contributes to chloride conductance in retinal pigment epithelium involved in phagocytosis of shed photoreceptor outer segments and photoreceptor renewal. Conducts chloride currents at the basolateral membrane of epithelial cells with a role in chloride reabsorption rather than secretion. Permeable to small monovalent anions with chloride &gt; thiocyanate &gt; bromide &gt; nitrate &gt; iodide ion selectivity. The sequence is that of Chloride channel protein 2 (CLCN2) from Cavia porcellus (Guinea pig).